Reading from the N-terminus, the 501-residue chain is Solute carrier family 2, facilitated glucose transporter member 5 (501 aa).

Met-1 carries the N-acetylmethionine modification. Topologically, residues 1–18 (MEPQDPVKREGRLTPVIV) are cytoplasmic. Residues 19–39 (LATLIAAFGSSFQYGYNVATI) form a helical membrane-spanning segment. Tyr-32 contacts D-fructose. Residues 40-68 (NSPSEFMKDFYNYTYYDRVGEYMNEFYLT) are Extracellular-facing. A glycan (N-linked (GlcNAc...) asparagine) is linked at Asn-51. Residues 69-91 (LLWSVTVSMFPFGGFLGSLMVGP) form a helical membrane-spanning segment. Residues 92–98 (LVNNLGR) lie on the Cytoplasmic side of the membrane. The chain crosses the membrane as a helical span at residues 99-119 (KGTLLFNNIFSIVPALLMGFS). At 120-126 (DLAKSFE) the chain is on the extracellular side. A helical transmembrane segment spans residues 127 to 149 (MIIVARVLVGICAGLSSNVVPMY). Residues 150–161 (LGELAPKNWRGA) lie on the Cytoplasmic side of the membrane. A helical transmembrane segment spans residues 162-182 (LGVVPQLFITIGILVAQIFGL). Gln-167 lines the D-fructose pocket. Residues 183-192 (RSLLANEEGW) lie on the Extracellular side of the membrane. Residues 193-213 (PILLGLTGIPAVLQLLFLPFF) traverse the membrane as a helical segment. Over 214–277 (PESPRYLLIQ…LFKMRSLRWQ (64 aa)) the chain is Cytoplasmic. A helical transmembrane segment spans residues 278–298 (VISIIVLMAGQQLSGVNAIYY). D-fructose contacts are provided by residues Gln-288 and 296–298 (IYY). Over 299–313 (YADQIYLSAGVKEDD) the chain is Extracellular. A helical transmembrane segment spans residues 314–334 (VQYVTAGTGAVNVLITVCAIF). Topologically, residues 335–342 (VVELMGRR) are cytoplasmic. A helical membrane pass occupies residues 343 to 363 (FLLLLGFSVCFTACCVLTGAL). Residues 364 to 371 (AMQDVISW) lie on the Extracellular side of the membrane. Residues 372-394 (MPYVSIACVISYVIGHALGPSPI) form a helical membrane-spanning segment. Residue His-387 participates in D-fructose binding. The Cytoplasmic portion of the chain corresponds to 395-412 (PALLVTEIFLQSSRPAAY). A helical membrane pass occupies residues 413 to 433 (MVAGTVHWLSNFTVGLVFPFI). D-fructose is bound at residue 419 to 420 (HW). Topologically, residues 434–439 (QVGLGA) are extracellular. A helical transmembrane segment spans residues 440–460 (YSFVIFAVICFLTTVYIFLII). At 461–501 (PETKSKTFIEINQIFIKMNKVPGVHPEKEELKEFPPSTARQ) the chain is on the cytoplasmic side.

The protein belongs to the major facilitator superfamily. Sugar transporter (TC 2.A.1.1) family. Glucose transporter subfamily.

The protein localises to the apical cell membrane. It is found in the cell membrane. It localises to the sarcolemma. It catalyses the reaction D-fructose(out) = D-fructose(in). In terms of biological role, functions as a fructose transporter that has only low activity with other monosaccharides. Can mediate the uptake of deoxyglucose, but with low efficiency. Essential for fructose uptake in the small intestine. Plays a role in the regulation of salt uptake and blood pressure in response to dietary fructose. Required for the development of high blood pressure in response to high dietary fructose intake. This Ovis aries (Sheep) protein is Solute carrier family 2, facilitated glucose transporter member 5.